The following is an 857-amino-acid chain: Protein app1 (857 aa).

The region spanning 6 to 133 is the ADF-H domain; sequence DTSTHGAEIR…NMDDIIRRVA (128 aa). 3 disordered regions span residues 167–562, 585–622, and 693–723; these read AKVA…VPQR, EVPS…VPQR, and QLNE…TEHT. A compositionally biased stretch (basic and acidic residues) spans 193–204; the sequence is KDSKDNSWDDSS. Low complexity predominate over residues 205-217; sequence KQSNTQTANTTSN. A compositionally biased stretch (basic and acidic residues) spans 229 to 240; it reads AGRKEKSQENKP. Polar residues-rich tracts occupy residues 276–295, 371–385, 399–409, 443–452, and 498–511; these read SIST…SHAP, PPAS…SPST, KQVSSNETSAQ, KISSFNSKAG, and SSAS…SVIT. Residues 522-561 show a composition bias toward low complexity; sequence VVPEAPSVHQPPAAPVAPEVPSAPQRPAAPVVPEAPSVPQ. Pro residues-rich tracts occupy residues 587–596 and 602–611; these read PSVPQPPVAP. Positions 612–622 are enriched in low complexity; that stretch reads VAPEVPSVPQR. SH3 domains lie at 725-785 and 800-857; these read PTKT…ITGP and GPGK…VEEI.

This is Protein app1 (app1) from Schizosaccharomyces pombe (strain 972 / ATCC 24843) (Fission yeast).